The following is a 212-amino-acid chain: Thiamine-phosphate synthase (212 aa).

4-amino-2-methyl-5-(diphosphooxymethyl)pyrimidine contacts are provided by residues 40–44 and asparagine 75; that span reads QFREK. Residues aspartate 76 and aspartate 95 each coordinate Mg(2+). Serine 113 is a binding site for 4-amino-2-methyl-5-(diphosphooxymethyl)pyrimidine. Residue 139 to 141 participates in 2-[(2R,5Z)-2-carboxy-4-methylthiazol-5(2H)-ylidene]ethyl phosphate binding; that stretch reads TIS. Lysine 142 lines the 4-amino-2-methyl-5-(diphosphooxymethyl)pyrimidine pocket. 2-[(2R,5Z)-2-carboxy-4-methylthiazol-5(2H)-ylidene]ethyl phosphate-binding positions include glycine 171 and 191–192; that span reads IS.

Belongs to the thiamine-phosphate synthase family. Requires Mg(2+) as cofactor.

It catalyses the reaction 2-[(2R,5Z)-2-carboxy-4-methylthiazol-5(2H)-ylidene]ethyl phosphate + 4-amino-2-methyl-5-(diphosphooxymethyl)pyrimidine + 2 H(+) = thiamine phosphate + CO2 + diphosphate. The enzyme catalyses 2-(2-carboxy-4-methylthiazol-5-yl)ethyl phosphate + 4-amino-2-methyl-5-(diphosphooxymethyl)pyrimidine + 2 H(+) = thiamine phosphate + CO2 + diphosphate. The catalysed reaction is 4-methyl-5-(2-phosphooxyethyl)-thiazole + 4-amino-2-methyl-5-(diphosphooxymethyl)pyrimidine + H(+) = thiamine phosphate + diphosphate. It functions in the pathway cofactor biosynthesis; thiamine diphosphate biosynthesis; thiamine phosphate from 4-amino-2-methyl-5-diphosphomethylpyrimidine and 4-methyl-5-(2-phosphoethyl)-thiazole: step 1/1. In terms of biological role, condenses 4-methyl-5-(beta-hydroxyethyl)thiazole monophosphate (THZ-P) and 2-methyl-4-amino-5-hydroxymethyl pyrimidine pyrophosphate (HMP-PP) to form thiamine monophosphate (TMP). This chain is Thiamine-phosphate synthase, found in Staphylococcus haemolyticus (strain JCSC1435).